The chain runs to 320 residues: Beta-ketoacyl-[acyl-carrier-protein] synthase III (320 aa).

Catalysis depends on residues C112 and H245. Residues 246–250 are ACP-binding; that stretch reads QANIR. The active site involves N275.

This sequence belongs to the thiolase-like superfamily. FabH family. Homodimer.

It is found in the cytoplasm. The catalysed reaction is malonyl-[ACP] + acetyl-CoA + H(+) = 3-oxobutanoyl-[ACP] + CO2 + CoA. It functions in the pathway lipid metabolism; fatty acid biosynthesis. Catalyzes the condensation reaction of fatty acid synthesis by the addition to an acyl acceptor of two carbons from malonyl-ACP. Catalyzes the first condensation reaction which initiates fatty acid synthesis and may therefore play a role in governing the total rate of fatty acid production. Possesses both acetoacetyl-ACP synthase and acetyl transacylase activities. Its substrate specificity determines the biosynthesis of branched-chain and/or straight-chain of fatty acids. This Streptococcus thermophilus (strain CNRZ 1066) protein is Beta-ketoacyl-[acyl-carrier-protein] synthase III.